The primary structure comprises 232 residues: Large ribosomal subunit protein uL1 (232 aa).

It belongs to the universal ribosomal protein uL1 family. As to quaternary structure, part of the 50S ribosomal subunit.

In terms of biological role, binds directly to 23S rRNA. The L1 stalk is quite mobile in the ribosome, and is involved in E site tRNA release. Its function is as follows. Protein L1 is also a translational repressor protein, it controls the translation of the L11 operon by binding to its mRNA. In Methylobacterium radiotolerans (strain ATCC 27329 / DSM 1819 / JCM 2831 / NBRC 15690 / NCIMB 10815 / 0-1), this protein is Large ribosomal subunit protein uL1.